Here is a 231-residue protein sequence, read N- to C-terminus: Trypsin-2 (231 aa).

The first 4 residues, Ala-1–Ala-4, serve as a signal peptide directing secretion. The propeptide at Thr-5 to Lys-9 is activation peptide. A Peptidase S1 domain is found at Ile-10 to Ala-229. Cystine bridges form between Cys-16-Cys-145, Cys-34-Cys-50, Cys-118-Cys-218, Cys-125-Cys-191, Cys-156-Cys-170, and Cys-181-Cys-205. The active-site Charge relay system is His-49. Glu-61, Asn-63, Val-66, and Glu-71 together coordinate Ca(2+). Asp-93 (charge relay system) is an active-site residue. Catalysis depends on Ser-185, which acts as the Charge relay system.

It belongs to the peptidase S1 family. Ca(2+) serves as cofactor.

The protein resides in the secreted. It is found in the extracellular space. The catalysed reaction is Preferential cleavage: Arg-|-Xaa, Lys-|-Xaa.. In Salmo salar (Atlantic salmon), this protein is Trypsin-2.